A 121-amino-acid chain; its full sequence is Large ribosomal subunit protein uL18 (121 aa).

It belongs to the universal ribosomal protein uL18 family. In terms of assembly, part of the 50S ribosomal subunit; part of the 5S rRNA/L5/L18/L25 subcomplex. Contacts the 5S and 23S rRNAs.

In terms of biological role, this is one of the proteins that bind and probably mediate the attachment of the 5S RNA into the large ribosomal subunit, where it forms part of the central protuberance. The chain is Large ribosomal subunit protein uL18 from Desulfotalea psychrophila (strain LSv54 / DSM 12343).